We begin with the raw amino-acid sequence, 255 residues long: tRNA (guanine-N(1)-)-methyltransferase (255 aa).

Residues Gly-117 and 137 to 142 contribute to the S-adenosyl-L-methionine site; that span reads LGDFVL.

This sequence belongs to the RNA methyltransferase TrmD family. Homodimer.

The protein resides in the cytoplasm. It carries out the reaction guanosine(37) in tRNA + S-adenosyl-L-methionine = N(1)-methylguanosine(37) in tRNA + S-adenosyl-L-homocysteine + H(+). In terms of biological role, specifically methylates guanosine-37 in various tRNAs. This Paraburkholderia phymatum (strain DSM 17167 / CIP 108236 / LMG 21445 / STM815) (Burkholderia phymatum) protein is tRNA (guanine-N(1)-)-methyltransferase.